Reading from the N-terminus, the 459-residue chain is Glutamyl-tRNA reductase (459 aa).

Substrate contacts are provided by residues 49–52, Ser109, 114–116, and Gln120; these read TCNR and ETQ. Catalysis depends on Cys50, which acts as the Nucleophile. 189 to 194 contacts NADP(+); the sequence is GAGKMG.

The protein belongs to the glutamyl-tRNA reductase family. In terms of assembly, homodimer.

It catalyses the reaction (S)-4-amino-5-oxopentanoate + tRNA(Glu) + NADP(+) = L-glutamyl-tRNA(Glu) + NADPH + H(+). Its pathway is porphyrin-containing compound metabolism; protoporphyrin-IX biosynthesis; 5-aminolevulinate from L-glutamyl-tRNA(Glu): step 1/2. Its function is as follows. Catalyzes the NADPH-dependent reduction of glutamyl-tRNA(Glu) to glutamate 1-semialdehyde (GSA). In Halalkalibacterium halodurans (strain ATCC BAA-125 / DSM 18197 / FERM 7344 / JCM 9153 / C-125) (Bacillus halodurans), this protein is Glutamyl-tRNA reductase.